A 248-amino-acid polypeptide reads, in one-letter code: MWLRCLALALTLLMVSGIENNTKDVCVGNPGIPGTPGSHGLPGRDGRDGVKGDPGPPGPLGPPGGMPGHPGPNGMTGAPGVAGERGEKGEPGERGPPGLPASLDEELQTTLHDLRHQILQTMGVLSLHESLLVVGRKVFSSNAQSINFNDIQELCAGAGGQIAAPMSPEENEAVASIVKKYNTYAYLGLVESPDSGDFQYMDGAPVNYTNWYPGEPRGRGKEQCVEMYTDGQWNNKNCLQYRLAICEF.

The first 17 residues, 1-17 (MWLRCLALALTLLMVSG), serve as a signal peptide directing secretion. The N-linked (GlcNAc...) asparagine glycan is linked to asparagine 20. In terms of domain architecture, Collagen-like spans 28–100 (GNPGIPGTPG…PGERGPPGLP (73 aa)). Positions 29–103 (NPGIPGTPGS…RGPPGLPASL (75 aa)) are disordered. Residues proline 30, proline 33, proline 36, proline 42, proline 54, proline 57, proline 63, proline 67, and proline 70 each carry the 4-hydroxyproline modification. Positions 42–51 (PGRDGRDGVK) are enriched in basic and acidic residues. Residues 54-65 (PGPPGPLGPPGG) are compositionally biased toward pro residues. Basic and acidic residues predominate over residues 84-93 (ERGEKGEPGE). The C-type lectin domain occupies 132-248 (LVVGRKVFSS…LQYRLAICEF (117 aa)). 2 disulfides stabilise this stretch: cysteine 155-cysteine 246 and cysteine 224-cysteine 238. Residue asparagine 207 is glycosylated (N-linked (GlcNAc...) asparagine). Positions 215, 217, and 234 each coordinate Ca(2+).

The protein belongs to the SFTPA family. As to quaternary structure, oligomeric complex of 6 set of homotrimers.

It localises to the secreted. It is found in the extracellular space. The protein localises to the extracellular matrix. Its subcellular location is the surface film. Functionally, in presence of calcium ions, it binds to surfactant phospholipids and contributes to lower the surface tension at the air-liquid interface in the alveoli of the mammalian lung and is essential for normal respiration. Enhances the expression of MYO18A/SP-R210 on alveolar macrophages. The chain is Pulmonary surfactant-associated protein A (SFTPA1) from Canis lupus familiaris (Dog).